We begin with the raw amino-acid sequence, 264 residues long: Purine nucleoside phosphorylase slr1573 (264 aa).

The Zn(2+) site is built by H61, C104, and H121.

The protein belongs to the purine nucleoside phosphorylase YfiH/LACC1 family. Homodimer. Cu(2+) is required as a cofactor. It depends on Zn(2+) as a cofactor.

It catalyses the reaction adenosine + phosphate = alpha-D-ribose 1-phosphate + adenine. The catalysed reaction is S-methyl-5'-thioadenosine + phosphate = 5-(methylsulfanyl)-alpha-D-ribose 1-phosphate + adenine. The enzyme catalyses inosine + phosphate = alpha-D-ribose 1-phosphate + hypoxanthine. It carries out the reaction adenosine + H2O + H(+) = inosine + NH4(+). Its function is as follows. Purine nucleoside enzyme that catalyzes the phosphorolysis of adenosine and inosine nucleosides, yielding D-ribose 1-phosphate and the respective free bases, adenine and hypoxanthine. Also catalyzes the phosphorolysis of S-methyl-5'-thioadenosine into adenine and S-methyl-5-thio-alpha-D-ribose 1-phosphate. Also has adenosine deaminase activity. The protein is Purine nucleoside phosphorylase slr1573 of Synechocystis sp. (strain ATCC 27184 / PCC 6803 / Kazusa).